The following is a 299-amino-acid chain: Nucleophosmin (299 aa).

The span at 125–134 (ESSDDEDEEH) shows a compositional bias: acidic residues. Residues 125–247 (ESSDDEDEEH…TPKTPLSSEE (123 aa)) are disordered. Residues 153-158 (PRKKTR) carry the Nuclear localization signal motif. Residues 160–187 (EEEEEDSDEDDDDDEDDDDEDDDEEEEE) are compositionally biased toward acidic residues. Positions 188–197 (TPVKKTDSTK) are enriched in basic and acidic residues. The short motif at 189-195 (PVKKTDS) is the Nuclear localization signal element. 4 consecutive repeats follow at residues 218 to 220 (KTP), 221 to 223 (KTP), 237 to 239 (KTP), and 240 to 242 (KTP). The interval 218–242 (KTPKTPEQKGKQDTKPQTPKTPKTP) is 4 X 3 AA repeats of K-T-P. Residues 221–231 (KTPEQKGKQDT) are compositionally biased toward basic and acidic residues. Over residues 232-242 (KPQTPKTPKTP) the composition is skewed to low complexity.

The protein belongs to the nucleoplasmin family. As to quaternary structure, decamer formed by two pentameric rings associated in a head-to-head fashion. Post-translationally, phosphorylated.

The protein localises to the cytoplasm. The protein resides in the nucleus. It localises to the nucleoplasm. Its subcellular location is the nucleolus. Its function is as follows. Acts as a chaperonin for the core histones H3, H2B and H4. Associated with nucleolar ribonucleoprotein structures and bind single-stranded nucleic acids. It may function in the assembly and/or transport of ribosome. May stimulate endonuclease activity on apurinic/apyrimidinic (AP) double-stranded DNA. May inhibit endonuclease activity on AP single-stranded RNA. The chain is Nucleophosmin (npm1) from Xenopus laevis (African clawed frog).